The primary structure comprises 261 residues: MYTDLKDKVVVITGGSTGLGRAMAVRFGQEEAKVVINYYNNEEEALDAKKEVEEAGGQAIIVQGDVTKEEDVVNLVQTAIKEFGTLDVMINNAGVENPVPSHELSLDNWNKVIDTNLTGAFLGSREAIKYFVENDIKGNVINMSSVHEMIPWPLFVHYAASKGGMKLMTETLALEYAPKGIRVNNIGPGAMNTPINAEKFADPEQRADVESMIPMGYIGKPEEVAAVAAFLASSQASYVTGITLFADGGMTKYPSFQAGRG.

11-35 is a binding site for NADP(+); the sequence is VITGGSTGLGRAMAVRFGQEEAKVV. Residue Ser145 coordinates substrate. Catalysis depends on Tyr158, which acts as the Proton acceptor.

Belongs to the short-chain dehydrogenases/reductases (SDR) family. Homotetramer.

The enzyme catalyses D-glucose + NAD(+) = D-glucono-1,5-lactone + NADH + H(+). The catalysed reaction is D-glucose + NADP(+) = D-glucono-1,5-lactone + NADPH + H(+). This is Glucose 1-dehydrogenase A (gdhA) from Priestia megaterium (Bacillus megaterium).